A 368-amino-acid chain; its full sequence is Anhydro-N-acetylmuramic acid kinase (368 aa).

11-18 (GTSLDGID) serves as a coordination point for ATP.

The protein belongs to the anhydro-N-acetylmuramic acid kinase family.

It catalyses the reaction 1,6-anhydro-N-acetyl-beta-muramate + ATP + H2O = N-acetyl-D-muramate 6-phosphate + ADP + H(+). It functions in the pathway amino-sugar metabolism; 1,6-anhydro-N-acetylmuramate degradation. It participates in cell wall biogenesis; peptidoglycan recycling. In terms of biological role, catalyzes the specific phosphorylation of 1,6-anhydro-N-acetylmuramic acid (anhMurNAc) with the simultaneous cleavage of the 1,6-anhydro ring, generating MurNAc-6-P. Is required for the utilization of anhMurNAc either imported from the medium or derived from its own cell wall murein, and thus plays a role in cell wall recycling. This Sulfurimonas denitrificans (strain ATCC 33889 / DSM 1251) (Thiomicrospira denitrificans (strain ATCC 33889 / DSM 1251)) protein is Anhydro-N-acetylmuramic acid kinase.